A 122-amino-acid chain; its full sequence is Large ribosomal subunit protein bL19 (122 aa).

This sequence belongs to the bacterial ribosomal protein bL19 family.

Its function is as follows. This protein is located at the 30S-50S ribosomal subunit interface and may play a role in the structure and function of the aminoacyl-tRNA binding site. In Chlamydia felis (strain Fe/C-56) (Chlamydophila felis), this protein is Large ribosomal subunit protein bL19.